A 474-amino-acid chain; its full sequence is tRNA-2-methylthio-N(6)-dimethylallyladenosine synthase (474 aa).

An MTTase N-terminal domain is found at 3–120 (KKLHIKTWGC…LPEMINHVQG (118 aa)). Residues C12, C49, C83, C157, C161, and C164 each coordinate [4Fe-4S] cluster. Positions 143-375 (RAEGPTAFVS…QQRISQQAME (233 aa)) constitute a Radical SAM core domain. The 64-residue stretch at 378–441 (RKMVGTVQRV…ASSLRGILLR (64 aa)) folds into the TRAM domain.

The protein belongs to the methylthiotransferase family. MiaB subfamily. In terms of assembly, monomer. [4Fe-4S] cluster serves as cofactor.

It localises to the cytoplasm. The catalysed reaction is N(6)-dimethylallyladenosine(37) in tRNA + (sulfur carrier)-SH + AH2 + 2 S-adenosyl-L-methionine = 2-methylsulfanyl-N(6)-dimethylallyladenosine(37) in tRNA + (sulfur carrier)-H + 5'-deoxyadenosine + L-methionine + A + S-adenosyl-L-homocysteine + 2 H(+). Catalyzes the methylthiolation of N6-(dimethylallyl)adenosine (i(6)A), leading to the formation of 2-methylthio-N6-(dimethylallyl)adenosine (ms(2)i(6)A) at position 37 in tRNAs that read codons beginning with uridine. In Yersinia pestis bv. Antiqua (strain Angola), this protein is tRNA-2-methylthio-N(6)-dimethylallyladenosine synthase.